The chain runs to 216 residues: Cobalt-zinc-cadmium resistance protein CzcN (216 aa).

3 helical membrane passes run 27–47 (IGVW…GHSR), 50–70 (GTWV…LATV), and 116–136 (ESLA…PAVI).

This sequence to A.xylosoxydans NccN.

It localises to the cell inner membrane. Functionally, component of the CZC cation-efflux system that confers resistance to cobalt, zinc and cadmium. The chain is Cobalt-zinc-cadmium resistance protein CzcN (czcN) from Cupriavidus metallidurans (strain ATCC 43123 / DSM 2839 / NBRC 102507 / CH34) (Ralstonia metallidurans).